The primary structure comprises 2364 residues: Spectrin beta chain, non-erythrocytic 1 (2364 aa).

At Thr2 the chain carries N-acetylthreonine. The interval 2 to 275 is actin-binding; it reads TTTVATDYDN…IITYVVTYYH (274 aa). 2 positions are modified to phosphoserine: Ile14 and Ser36. Calponin-homology (CH) domains lie at 54–158 and 173–278; these read AVQK…LRFQ and KSAK…HYFS. The residue at position 90 (Lys90) is an N6-acetyllysine. Ser228 carries the phosphoserine modification. Spectrin repeat units lie at residues 303–411, 423–525, 530–636, 639–742, 745–847, 850–952, 957–1060, 1063–1166, 1170–1258, 1276–1376, 1381–1482, 1486–1590, 1592–1696, 1698–1801, and 1805–1907; these read MIEK…LALR, LARR…QRLE, LQKI…RLEE, RLWK…RLEE, LLHQ…ALQD, ALYK…DALL, IQNY…SLGE, KLQQ…NLLS, AYQQ…DRHR, DLQK…AQRL, KAEL…HNLL, EIHQ…RLEE, HRAQ…KLDE, HRLF…TQIL, and YELH…RVRL. Phosphoserine is present on residues Ser817, Ser825, Ser903, Ser1057, Ser1076, Ser1079, and Ser1237. Ser1388, Ser1447, and Ser1557 each carry phosphoserine. Residues 1563–2093 form an interaction with ANK2 region; the sequence is IRQRLADLKQ…LLEVRRQQEE (531 aa). Residue Tyr1805 is modified to Phosphotyrosine. Residues Lys1815, Lys1913, and Lys1989 each carry the N6-acetyllysine modification. 2 Spectrin repeats span residues 1914–2014 and 2018–2097; these read FRFF…EWLR and EVHQ…EERK. Positions 2089–2196 are disordered; it reads RQQEEEERKR…TLPARTQETP (108 aa). 3 positions are modified to phosphoserine: Ser2102, Ser2128, and Ser2138. The segment covering 2115-2131 has biased composition (polar residues); the sequence is SQQQWDTSKGEQVSQNG. Residues 2145-2166 are compositionally biased toward polar residues; that stretch reads VDTSEMVNGATEQRTSSKESSP. Thr2147 carries the post-translational modification Phosphothreonine. Ser2148 carries the post-translational modification Phosphoserine. A mediates interaction with CAMSAP1 region spans residues 2149–2177; that stretch reads EMVNGATEQRTSSKESSPIPSPTSDRKAK. A Phosphothreonine modification is found at Thr2159. A phosphoserine mark is found at Ser2160, Ser2161, Ser2164, Ser2165, and Ser2169. At Thr2171 the chain carries Phosphothreonine. 2 positions are modified to phosphoserine: Ser2172 and Ser2184. Over residues 2184–2196 the composition is skewed to polar residues; the sequence is SAATLPARTQETP. Phosphothreonine occurs at positions 2187 and 2195. The PH domain maps to 2197 to 2307; the sequence is SAQMEGFLNR…WIQAISSAIS (111 aa). Residues 2309 to 2364 form a disordered region; that stretch reads DKHEVSASTQSTPASSRAQTLPTSVVTITSESSPGKREKDKEKDKEKRFSLFGKKK. Phosphoserine occurs at positions 2314 and 2319. Residues 2314 to 2341 show a composition bias toward polar residues; it reads SASTQSTPASSRAQTLPTSVVTITSESS. Position 2320 is a phosphothreonine (Thr2320). A glycan (O-linked (GlcNAc) serine) is linked at Ser2324. Thr2328 carries the post-translational modification Phosphothreonine. 2 positions are modified to phosphoserine: Ser2340 and Ser2341. The span at 2342-2357 shows a compositional bias: basic and acidic residues; sequence PGKREKDKEKDKEKRF.

It belongs to the spectrin family. In terms of assembly, interacts with CAMSAP1. Interacts with ANK2. Interacts with CPNE4 (via VWFA domain). Like erythrocyte spectrin, the spectrin-like proteins are capable to form dimers which can further associate to tetramers. Can form heterodimers with SPTAN1. Isoform Short cannot bind to the axonal protein fodaxin. In terms of tissue distribution, isoform 2 is present in brain, lung and kidney (at protein level).

It is found in the cytoplasm. It localises to the cytoskeleton. The protein resides in the myofibril. Its subcellular location is the sarcomere. The protein localises to the m line. It is found in the cytosol. It localises to the cell membrane. Fodrin, which seems to be involved in secretion, interacts with calmodulin in a calcium-dependent manner and is thus candidate for the calcium-dependent movement of the cytoskeleton at the membrane. Plays a critical role in central nervous system development and function. The polypeptide is Spectrin beta chain, non-erythrocytic 1 (SPTBN1) (Homo sapiens (Human)).